Here is a 734-residue protein sequence, read N- to C-terminus: Subtilisin-like protease (734 aa).

An N-terminal signal peptide occupies residues methionine 1–alanine 20. The region spanning threonine 28 to histidine 109 is the Inhibitor I9 domain. One can recognise a Peptidase S8 domain in the interval proline 114 to serine 591. Aspartate 141 (charge relay system) is an active-site residue. N-linked (GlcNAc...) asparagine glycosylation is present at asparagine 172. Histidine 199 serves as the catalytic Charge relay system. Asparagine 222 and asparagine 306 each carry an N-linked (GlcNAc...) asparagine glycan. Positions proline 357–methionine 442 constitute a PA domain. N-linked (GlcNAc...) asparagine glycans are attached at residues asparagine 448 and asparagine 509. Serine 524 (charge relay system) is an active-site residue. Residue asparagine 652 is glycosylated (N-linked (GlcNAc...) asparagine).

This sequence belongs to the peptidase S8 family.

It localises to the secreted. It is found in the extracellular space. Its subcellular location is the apoplast. Functionally, required for arbuscular mycorrhiza (AM) development during AM symbiosis with AM fungi (e.g. Glomeromycota intraradices). The polypeptide is Subtilisin-like protease (Petunia hybrida (Petunia)).